Reading from the N-terminus, the 110-residue chain is Small ribosomal subunit protein mS33 (110 aa).

The span at 84 to 95 (KRRGKGAPKKMK) shows a compositional bias: basic residues. The segment at 84 to 110 (KRRGKGAPKKMKKDAAATAKGKGKKKK) is disordered.

Belongs to the mitochondrion-specific ribosomal protein mS33 family. In terms of assembly, component of the mitochondrial small ribosomal subunit (mt-SSU). Mature yeast 74S mitochondrial ribosomes consist of a small (37S) and a large (54S) subunit. The 37S small subunit contains a 15S ribosomal RNA (15S mt-rRNA) and 34 different proteins. The 54S large subunit contains a 21S rRNA (21S mt-rRNA) and 46 different proteins.

It localises to the mitochondrion. Component of the mitochondrial ribosome (mitoribosome), a dedicated translation machinery responsible for the synthesis of mitochondrial genome-encoded proteins, including at least some of the essential transmembrane subunits of the mitochondrial respiratory chain. The mitoribosomes are attached to the mitochondrial inner membrane and translation products are cotranslationally integrated into the membrane. This Saccharomyces cerevisiae (strain ATCC 204508 / S288c) (Baker's yeast) protein is Small ribosomal subunit protein mS33 (RSM27).